A 71-amino-acid polypeptide reads, in one-letter code: Small ribosomal subunit protein bS21 (71 aa).

A disordered region spans residues 37–71 (HYEKPTQERKRKAAAAVKRHMKRLSREQARRRRLY). Residues 45–71 (RKRKAAAAVKRHMKRLSREQARRRRLY) are compositionally biased toward basic residues.

It belongs to the bacterial ribosomal protein bS21 family.

The protein is Small ribosomal subunit protein bS21 of Alkalilimnicola ehrlichii (strain ATCC BAA-1101 / DSM 17681 / MLHE-1).